We begin with the raw amino-acid sequence, 205 residues long: MTAHNFFWDGDWFSPQASQDQNLIAQLDFVPGLRELLFIRQAHALEHGTVWVLTELAERYPTAWRHHYAELSGMSTGQGFYLFGGVDKTDLYRAVSTAGDRLRSGEWNLAIHPRCGTNISVTLLLTAGLAGGAAWLLPKDPLTQLFGMGTAAATAWAIAPDLGKYAQQHITTAIPLNLALEEIQENTDESGNPSHFVRLRWQDAQ.

This is an uncharacterized protein from Picosynechococcus sp. (strain ATCC 27264 / PCC 7002 / PR-6) (Agmenellum quadruplicatum).